The sequence spans 173 residues: RNA 2',3'-cyclic phosphodiesterase (173 aa).

H38 functions as the Proton donor in the catalytic mechanism. Short sequence motifs (HXTX) lie at residues H38–V41 and H118–I121. H118 serves as the catalytic Proton acceptor.

It belongs to the 2H phosphoesterase superfamily. ThpR family.

The catalysed reaction is a 3'-end 2',3'-cyclophospho-ribonucleotide-RNA + H2O = a 3'-end 2'-phospho-ribonucleotide-RNA + H(+). Functionally, hydrolyzes RNA 2',3'-cyclic phosphodiester to an RNA 2'-phosphomonoester. The chain is RNA 2',3'-cyclic phosphodiesterase from Methanocaldococcus jannaschii (strain ATCC 43067 / DSM 2661 / JAL-1 / JCM 10045 / NBRC 100440) (Methanococcus jannaschii).